A 427-amino-acid polypeptide reads, in one-letter code: 3-phosphoshikimate 1-carboxyvinyltransferase (427 aa).

3-phosphoshikimate is bound by residues K20, S21, and R25. K20 lines the phosphoenolpyruvate pocket. G92 and R120 together coordinate phosphoenolpyruvate. 3-phosphoshikimate-binding residues include S166, Q168, D312, and K339. Residue Q168 participates in phosphoenolpyruvate binding. Catalysis depends on D312, which acts as the Proton acceptor. Phosphoenolpyruvate contacts are provided by R343 and R385.

The protein belongs to the EPSP synthase family. In terms of assembly, monomer.

The protein resides in the cytoplasm. The enzyme catalyses 3-phosphoshikimate + phosphoenolpyruvate = 5-O-(1-carboxyvinyl)-3-phosphoshikimate + phosphate. Its pathway is metabolic intermediate biosynthesis; chorismate biosynthesis; chorismate from D-erythrose 4-phosphate and phosphoenolpyruvate: step 6/7. Functionally, catalyzes the transfer of the enolpyruvyl moiety of phosphoenolpyruvate (PEP) to the 5-hydroxyl of shikimate-3-phosphate (S3P) to produce enolpyruvyl shikimate-3-phosphate and inorganic phosphate. This is 3-phosphoshikimate 1-carboxyvinyltransferase from Streptococcus pneumoniae (strain Hungary19A-6).